The following is a 188-amino-acid chain: MVAKLFVLVACIALSHAAMVRRDAPPANTLLQDIEKHAAEIHKTFSEQLNSIANSKNTQEVNKAIKDGSDSVLQQLSALSSSLQSAMTDANAKAKTALEQARQNLEKTAEDLRKSHPDVERQAGELRTKLQAAVQNTAQEVQKLAKEVASNVEETNEKLAPKLKEAYENFSKHVEEVQKKVHEAASKQ.

The N-terminal stretch at 1-17 (MVAKLFVLVACIALSHA) is a signal peptide. The propeptide occupies 18 to 22 (AMVRR).

The protein belongs to the insect apolipophorin-3 family. As to quaternary structure, equilibrium between a soluble monomer and a bound lipoprotein form. Apolipophorin-3 associates with lipophorin during lipid loading until each particle contains 9 or 14 molecules of apolipophorin-3. Expressed in fat body and secreted in hemolymph. Also expressed in ovary and testis at lower levels.

The protein localises to the secreted. Functionally, assists in the loading of diacylglycerol, generated from triacylglycerol stores in the fat body through the action of adipokinetic hormone, into lipophorin, the hemolymph lipoprotein. It increases the lipid carrying capacity of lipophorin by covering the expanding hydrophobic surface resulting from diacylglycerol uptake. It thus plays a critical role in the transport of lipids during flight in several species of insects. The protein is Apolipophorin-3 of Spodoptera litura (Asian cotton leafworm).